We begin with the raw amino-acid sequence, 62 residues long: Bacteriocin pediocin PA-1 (62 aa).

Positions 1–18 are excised as a propeptide; sequence MKKIEKLTEKEMANIIGG. Disulfide bonds link cysteine 27–cysteine 32 and cysteine 42–cysteine 62. Positions 40-52 are hydrophobic; that stretch reads TTCIINNGAMAWA.

The protein belongs to the bacteriocin class IIA/YGNGV family.

The protein localises to the secreted. Bactericidal activity (effective inhibitor of L.monocytogenes). This chain is Bacteriocin pediocin PA-1 (pedA), found in Pediococcus acidilactici.